The chain runs to 356 residues: Manganese-dependent ADP-ribose/CDP-alcohol diphosphatase (356 aa).

Positions 32, 34, 81, 117, 253, 290, and 292 each coordinate Zn(2+).

The protein belongs to the ADPRibase-Mn family. Monomer. Mg(2+) serves as cofactor.

It catalyses the reaction CDP-choline + H2O = phosphocholine + CMP + 2 H(+). It carries out the reaction ADP-D-ribose + H2O = D-ribose 5-phosphate + AMP + 2 H(+). The catalysed reaction is CDP-glycerol + H2O = sn-glycerol 3-phosphate + CMP + 2 H(+). Hydrolyzes ADP-ribose, IDP-ribose, CDP-glycerol, CDP-choline and CDP-ethanolamine, but not other non-reducing ADP-sugars or CDP-glucose. The protein is Manganese-dependent ADP-ribose/CDP-alcohol diphosphatase (adprm) of Xenopus laevis (African clawed frog).